A 269-amino-acid chain; its full sequence is 3-deoxy-manno-octulosonate cytidylyltransferase (269 aa).

The protein belongs to the KdsB family.

The protein resides in the cytoplasm. The enzyme catalyses 3-deoxy-alpha-D-manno-oct-2-ulosonate + CTP = CMP-3-deoxy-beta-D-manno-octulosonate + diphosphate. The protein operates within nucleotide-sugar biosynthesis; CMP-3-deoxy-D-manno-octulosonate biosynthesis; CMP-3-deoxy-D-manno-octulosonate from 3-deoxy-D-manno-octulosonate and CTP: step 1/1. It participates in bacterial outer membrane biogenesis; lipopolysaccharide biosynthesis. Its function is as follows. Activates KDO (a required 8-carbon sugar) for incorporation into bacterial lipopolysaccharide in Gram-negative bacteria. This Cupriavidus necator (strain ATCC 17699 / DSM 428 / KCTC 22496 / NCIMB 10442 / H16 / Stanier 337) (Ralstonia eutropha) protein is 3-deoxy-manno-octulosonate cytidylyltransferase.